We begin with the raw amino-acid sequence, 756 residues long: Rab11 family-interacting protein 3 (756 aa).

Over residues 1–24 (MASAPPASPPGSEPPGPDPEPGGP) the composition is skewed to pro residues. The disordered stretch occupies residues 1–204 (MASAPPASPP…SEPVGSQEDG (204 aa)). Positions 2 to 435 (ASAPPASPPG…RLSSKKVARY (434 aa)) are important for binding to DYNC1LI1. A compositionally biased stretch (low complexity) spans 27 to 39 (PGAAQLAPGPAEL). Ser52 carries the phosphoserine modification. Positions 53 to 68 (PGLDEPAPGAAADGGA) are enriched in low complexity. Residues 84 to 94 (DPGPSAPPPRS) show a composition bias toward pro residues. A Phosphoserine; by CDK1 modification is found at Ser102. EF-hand domains are found at residues 202 to 237 (EDGP…YGAE) and 234 to 269 (YGAE…IRNG). Ca(2+)-binding residues include Asp215, Asp217, Asp219, Asp226, Asp247, Ser249, and Asp258. 6 positions are modified to phosphoserine: Ser281, Ser348, Ser488, Ser538, Ser647, and Ser648. An ARF-binding domain (ABD) region spans residues 484–588 (GEQHSRLRQE…LLDEIESLTL (105 aa)). Residues 485 to 694 (EQHSRLRQEN…NGQIITLSIQ (210 aa)) adopt a coiled-coil conformation. Residues 645 to 664 (RSSSMGLQEYHSRARESELE) are disordered. Residues 654–664 (YHSRARESELE) are compositionally biased toward basic and acidic residues. Residues 694-756 (QGAKSLFSTA…ETNPSILEVK (63 aa)) form the FIP-RBD domain.

In terms of assembly, homodimer. Interacts with RAB11A; the interaction is direct and is required for the recruitment to endosomes. Interacts with RAB11B. Forms a ternary complex with RAB11A and dynein intermediate chain DYNC1LI1; RAB11FIP3 links RAB11A to dynein and the interaction regulates endocytic trafficking. Interacts with dynein intermediate chain and dynactin (DCTN1); the interaction activates dynein processivity. Interacts with ARF6 and EXOC7; the interaction serves for recruitment and tethering of recycling endosomes-derived vesicles to the cleavage furrow/midbody. Interacts with RACGAP1/MgcRacGAP; the interaction occurs at late telophase and is required for recruitment and tethering of recycling endosomes-derived vesicles to the cleavage furrow/midbody. Forms a complex with RAB11A and Rabin8/RAB3IP, probably a heterohexamer with two of each protein subunit, where RAB3IP and RAB11FIP3 simultaneously bind to RAB11A; the complex promotes preciliary trafficking. Forms a complex containing RAB11A, ASAP1, RAB3IP, RAP11FIP3 and ARF4; the complex promotes preciliary trafficking; the complex binds to RHO in photoreceptor cells and promotes RHO ciliary transport. Interacts with RAB11FIP4. Interacts with RAB25. Phosphorylated at Ser-102 by CDK1 during metaphase, and dephosphorylated as cells enter telophase.

The protein resides in the endosome membrane. Its subcellular location is the recycling endosome membrane. It localises to the cytoplasm. It is found in the cytoskeleton. The protein localises to the microtubule organizing center. The protein resides in the centrosome. Its subcellular location is the cleavage furrow. It localises to the midbody. It is found in the golgi apparatus membrane. The protein localises to the golgi apparatus. The protein resides in the trans-Golgi network membrane. Functionally, downstream effector molecule for Rab11 GTPase which is involved in endocytic trafficking, cytokinesis and intracellular ciliogenesis by participating in membrane delivery. Recruited by Rab11 to endosomes where it links Rab11 to dynein motor complex. The functional Rab11-RAB11FIP3-dynein complex regulates the movement of peripheral sorting endosomes (SE) along microtubule tracks toward the microtubule organizing center/centrosome, generating the endocytic recycling compartment (ERC) during interphase of cell cycle. Facilitates the interaction between dynein and dynactin and activates dynein processivity. Binding with ASAP1 is needed to regulate the pericentrosomal localization of recycling endosomes. The Rab11-RAB11FIP3 complex is also implicated in the transport during telophase of vesicles derived from recycling endosomes to the cleavage furrow via centrosome-anchored microtubules, where the vesicles function to deliver membrane during late cytokinesis and abscission. The recruitment of Rab11-RAB11FIP3-containing endosomes to the cleavage furrow and tethering to the midbody is co-mediated by RAB11FIP3 interaction with ARF6-exocyst and RACGAP1-MKLP1 tethering complexes. Also involved in the Rab11-Rabin8-Rab8 ciliogenesis cascade by facilitating the orderly assembly of a ciliary targeting complex containing Rab11, ASAP1, Rabin8/RAB3IP, RAB11FIP3 and ARF4, which directs preciliary vesicle trafficking to mother centriole and ciliogenesis initiation. Also promotes the activity of Rab11 and ASAP1 in the ARF4-dependent Golgi-to-cilia transport of the sensory receptor rhodopsin. Competes with WDR44 for binding to Rab11, which controls intracellular ciliogenesis pathway. May play a role in breast cancer cell motility by regulating actin cytoskeleton. The sequence is that of Rab11 family-interacting protein 3 from Homo sapiens (Human).